We begin with the raw amino-acid sequence, 176 residues long: ATP-dependent protease subunit HslV (176 aa).

Threonine 5 is an active-site residue. 3 residues coordinate Na(+): serine 161, cysteine 164, and threonine 167.

This sequence belongs to the peptidase T1B family. HslV subfamily. As to quaternary structure, a double ring-shaped homohexamer of HslV is capped on each side by a ring-shaped HslU homohexamer. The assembly of the HslU/HslV complex is dependent on binding of ATP.

It is found in the cytoplasm. The catalysed reaction is ATP-dependent cleavage of peptide bonds with broad specificity.. Allosterically activated by HslU binding. Protease subunit of a proteasome-like degradation complex believed to be a general protein degrading machinery. The polypeptide is ATP-dependent protease subunit HslV (Desulfitobacterium hafniense (strain DSM 10664 / DCB-2)).